Here is a 263-residue protein sequence, read N- to C-terminus: Protein M1627_2099 (263 aa).

The protein belongs to the CinA family.

This chain is Protein M1627_2099, found in Saccharolobus islandicus (strain M.16.27) (Sulfolobus islandicus).